We begin with the raw amino-acid sequence, 1379 residues long: DNA-directed RNA polymerase subunit beta'' (1379 aa).

Zn(2+)-binding residues include Cys220, Cys293, Cys300, and Cys303.

The protein belongs to the RNA polymerase beta' chain family. RpoC2 subfamily. As to quaternary structure, in plastids the minimal PEP RNA polymerase catalytic core is composed of four subunits: alpha, beta, beta', and beta''. When a (nuclear-encoded) sigma factor is associated with the core the holoenzyme is formed, which can initiate transcription. It depends on Zn(2+) as a cofactor.

The protein resides in the plastid. It is found in the chloroplast. The catalysed reaction is RNA(n) + a ribonucleoside 5'-triphosphate = RNA(n+1) + diphosphate. In terms of biological role, DNA-dependent RNA polymerase catalyzes the transcription of DNA into RNA using the four ribonucleoside triphosphates as substrates. The sequence is that of DNA-directed RNA polymerase subunit beta'' from Olimarabidopsis pumila (Dwarf rocket).